The following is a 103-amino-acid chain: Large ribosomal subunit protein uL24 (103 aa).

It belongs to the universal ribosomal protein uL24 family. In terms of assembly, part of the 50S ribosomal subunit.

Its function is as follows. One of two assembly initiator proteins, it binds directly to the 5'-end of the 23S rRNA, where it nucleates assembly of the 50S subunit. In terms of biological role, one of the proteins that surrounds the polypeptide exit tunnel on the outside of the subunit. This Pasteurella multocida (strain Pm70) protein is Large ribosomal subunit protein uL24.